The chain runs to 97 residues: YcgL domain-containing protein PputGB1_4120 (97 aa).

One can recognise a YcgL domain in the interval 3-87 (RICSIYKSPR…AEDEYIEHLP (85 aa)).

In Pseudomonas putida (strain GB-1), this protein is YcgL domain-containing protein PputGB1_4120.